The chain runs to 119 residues: Autophagy-related protein 8C-like (119 aa).

A lipid anchor (Phosphatidylethanolamine amidated glycine) is attached at G117. Residues S118 to F119 constitute a propeptide, removed in mature form.

Belongs to the ATG8 family. As to quaternary structure, interacts with ATG4. Interacts with the Phytophtora infestans effector PexRD54. Interacts with JOKA2. Post-translationally, the C-terminal 2 residues are removed by ATG4 to expose Gly-117 at the C-terminus. The C-terminal Gly is then amidated with phosphatidylethanolamine by an activating system similar to that for ubiquitin. The phosphatidylethanolamine amidated glycine is required for autophagosome formation.

It localises to the cytoplasmic vesicle. The protein resides in the autophagosome membrane. Its subcellular location is the vacuole membrane. It is found in the cytoplasm. The protein localises to the cytoskeleton. Functionally, ubiquitin-like modifier involved in autophagosomes formation. May mediate the delivery of the autophagosomes to the vacuole via the microtubule cytoskeleton. ATG8CL-mediated selective autophagy contributes to defense against the fungal pathogen Phytophtora infestans. The protein is Autophagy-related protein 8C-like of Solanum tuberosum (Potato).